The sequence spans 255 residues: Protein N-terminal and lysine N-methyltransferase efm7 (255 aa).

Residues 1-25 (MADNDFEGFGIFEEPEGFRPSTPPP) form a disordered region. S-adenosyl-L-methionine contacts are provided by residues Trp58, 84–86 (GAG), Asp106, Trp137, and Ser162.

Belongs to the class I-like SAM-binding methyltransferase superfamily. EFM7 family.

Its subcellular location is the cytoplasm. Functionally, S-adenosyl-L-methionine-dependent protein methyltransferase that trimethylates the N-terminal glycine 'Gly-2' of elongation factor 1-alpha, before also catalyzing the mono- and dimethylation of 'Lys-3'. In Schizosaccharomyces pombe (strain 972 / ATCC 24843) (Fission yeast), this protein is Protein N-terminal and lysine N-methyltransferase efm7.